Here is a 211-residue protein sequence, read N- to C-terminus: MTSQRTRERLIQRLCEEGIANQRVLDVIRKTPRHLFVDEALAHRAYEDTALPIGHNQTISQPYMVARMSELLLAAGPLDKVMEIGTGSGYQTAVLSQLVERVFSVERIKGLQDRAKERLVELNLRNVVFRWGDGWEGWPALAPYNGIIVTAVATDVPQALLDQLAPGGRLVIPVGAGEVQQLMLIIREENGFSRHVLGAVRFVPLLNGPIA.

Ser-60 is an active-site residue.

Belongs to the methyltransferase superfamily. L-isoaspartyl/D-aspartyl protein methyltransferase family.

It localises to the cytoplasm. It catalyses the reaction [protein]-L-isoaspartate + S-adenosyl-L-methionine = [protein]-L-isoaspartate alpha-methyl ester + S-adenosyl-L-homocysteine. Functionally, catalyzes the methyl esterification of L-isoaspartyl residues in peptides and proteins that result from spontaneous decomposition of normal L-aspartyl and L-asparaginyl residues. It plays a role in the repair and/or degradation of damaged proteins. This chain is Protein-L-isoaspartate O-methyltransferase, found in Pseudomonas syringae pv. tomato (strain ATCC BAA-871 / DC3000).